Reading from the N-terminus, the 699-residue chain is MRWLLLYYALCFSLSKASAHTVELNNMFGQIQSPGYPDSYPSDSEVTWNITVPDGFRIKLYFMHFNLESSYLCEYDYVKVETEDQVLATFCGRETTDTEQTPGQEVVLSPGSFMSITFRSDFSNEERFTGFDAHYMAVDVDECKEREDEELSCDHYCHNYIGGYYCSCRFGYILHTDNRTCRVECSDNLFTQRTGVITSPDFPNPYPKSSECLYTIELEEGFMVNLQFEDIFDIEDHPEVPCPYDYIKIKVGPKVLGPFCGEKAPEPISTQSHSVLILFHSDNSGENRGWRLSYRAAGNECPELQPPVHGKIEPSQAKYFFKDQVLVSCDTGYKVLKDNVEMDTFQIECLKDGTWSNKIPTCKIVDCRAPGELEHGLITFSTRNNLTTYKSEIKYSCQEPYYKMLNNNTGIYTCSAQGVWMNKVLGRSLPTCLPVCGLPKFSRKLMARIFNGRPAQKGTTPWIAMLSHLNGQPFCGGSLLGSSWIVTAAHCLHQSLDPEDPTLRDSDLLSPSDFKIILGKHWRLRSDENEQHLGVKHTTLHPQYDPNTFENDVALVELLESPVLNAFVMPICLPEGPQQEGAMVIVSGWGKQFLQRFPETLMEIEIPIVDHSTCQKAYAPLKKKVTRDMICAGEKEGGKDACAGDSGGPMVTLNRERGQWYLVGTVSWGDDCGKKDRYGVYSYIHHNKDWIQRVTGVRN.

The first 19 residues, 1–19, serve as a signal peptide directing secretion; it reads MRWLLLYYALCFSLSKASA. The region spanning 20–138 is the CUB 1 domain; sequence HTVELNNMFG…TGFDAHYMAV (119 aa). The homodimerization stretch occupies residues 20–184; it reads HTVELNNMFG…HTDNRTCRVE (165 aa). The interval 20 to 184 is interaction with MBL2; the sequence is HTVELNNMFG…HTDNRTCRVE (165 aa). Residues 20–278 are interaction with FCN2; it reads HTVELNNMFG…STQSHSVLIL (259 aa). N-linked (GlcNAc...) asparagine glycosylation is present at Asn-49. 7 residues coordinate Ca(2+): Glu-68, Asp-76, Asp-121, Ser-123, Asp-139, Val-140, and Glu-142. Cys-73 and Cys-91 are disulfide-bonded. The EGF-like; calcium-binding domain maps to 139–182; that stretch reads DVDECKEREDEELSCDHYCHNYIGGYYCSCRFGYILHTDNRTCR. Intrachain disulfides connect Cys-143–Cys-157, Cys-153–Cys-166, Cys-168–Cys-181, and Cys-185–Cys-212. Residues Asn-159, Tyr-160, and Gly-163 each coordinate Ca(2+). At Asn-159 the chain carries (3R)-3-hydroxyasparagine. Residue Asn-178 is glycosylated (N-linked (GlcNAc...) (complex) asparagine). The CUB 2 domain occupies 185 to 297; it reads CSDNLFTQRT…RGWRLSYRAA (113 aa). Ca(2+) contacts are provided by Glu-235, Asp-245, Asp-282, and Ser-284. A disulfide bridge links Cys-242 with Cys-260. 2 consecutive Sushi domains span residues 299 to 364 and 365 to 434; these read NECP…TCKI and VDCR…TCLP. 6 disulfides stabilise this stretch: Cys-301-Cys-349, Cys-329-Cys-362, Cys-367-Cys-414, Cys-397-Cys-432, Cys-436-Cys-572, and Cys-475-Cys-491. Asn-385 carries an N-linked (GlcNAc...) (complex) asparagine glycan. N-linked (GlcNAc...) asparagine glycosylation is present at Asn-407. Residues 449–696 form the Peptidase S1 domain; it reads IFNGRPAQKG…NKDWIQRVTG (248 aa). His-490 acts as the Charge relay system in catalysis. A glycan (N-linked (GlcNAc) asparagine) is linked at Leu-533. Asp-552 functions as the Charge relay system in the catalytic mechanism. Residue Glu-599 is glycosylated (N-linked (GlcNAc) asparagine). 2 disulfide bridges follow: Cys-614–Cys-631 and Cys-642–Cys-672. Ser-646 serves as the catalytic Charge relay system.

This sequence belongs to the peptidase S1 family. Homodimer. Interacts with the oligomeric lectins MBL2, FCN2 and FCN3; triggers the lectin pathway of complement through activation of C3. Interacts with SERPING1. Interacts with COLEC11; probably triggers the lectin pathway of complement. In terms of processing, the iron and 2-oxoglutarate dependent 3-hydroxylation of aspartate and asparagine is (R) stereospecific within EGF domains. Post-translationally, N-glycosylated. Some N-linked glycan are of the complex-type. Autoproteolytic processing of the proenzyme produces the active enzyme composed on the heavy and the light chain held together by a disulfide bond. Isoform 1 but not isoform 2 is activated through autoproteolytic processing. Protein of the plasma which is primarily expressed by liver.

The protein localises to the secreted. Its activity is regulated as follows. Inhibited by SERPING1 and A2M. Functionally, functions in the lectin pathway of complement, which performs a key role in innate immunity by recognizing pathogens through patterns of sugar moieties and neutralizing them. The lectin pathway is triggered upon binding of mannan-binding lectin (MBL) and ficolins to sugar moieties which leads to activation of the associated proteases MASP1 and MASP2. Functions as an endopeptidase and may activate MASP2 or C2 or directly activate C3 the key component of complement reaction. Isoform 2 may have an inhibitory effect on the activation of the lectin pathway of complement or may cleave IGFBP5. Also plays a role in development. This Homo sapiens (Human) protein is Mannan-binding lectin serine protease 1 (MASP1).